The primary structure comprises 95 residues: Aspartyl/glutamyl-tRNA(Asn/Gln) amidotransferase subunit C (95 aa).

Belongs to the GatC family. Heterotrimer of A, B and C subunits.

It catalyses the reaction L-glutamyl-tRNA(Gln) + L-glutamine + ATP + H2O = L-glutaminyl-tRNA(Gln) + L-glutamate + ADP + phosphate + H(+). It carries out the reaction L-aspartyl-tRNA(Asn) + L-glutamine + ATP + H2O = L-asparaginyl-tRNA(Asn) + L-glutamate + ADP + phosphate + 2 H(+). In terms of biological role, allows the formation of correctly charged Asn-tRNA(Asn) or Gln-tRNA(Gln) through the transamidation of misacylated Asp-tRNA(Asn) or Glu-tRNA(Gln) in organisms which lack either or both of asparaginyl-tRNA or glutaminyl-tRNA synthetases. The reaction takes place in the presence of glutamine and ATP through an activated phospho-Asp-tRNA(Asn) or phospho-Glu-tRNA(Gln). The sequence is that of Aspartyl/glutamyl-tRNA(Asn/Gln) amidotransferase subunit C from Anaeromyxobacter sp. (strain Fw109-5).